We begin with the raw amino-acid sequence, 441 residues long: MDVHFDNWRFLSRPDKVIVHLLLPQTFFESHHIPFDPNLTFWSQTRFHHLDFPPTRYVKIWGKLYFSLPGLPSKACPGIAVSLVINIEENMYNPFDMTVLKILLNENIYYIKFFHMELFFPYIAPNSLQDTSIEEPFKNVDHIDAILNTTSPVTNLYKNPLGVLANLLQSRPQSSPRHHFALEDPGKVRGYEQPSLLQTDKAMPKVSYVKHKWSILNSEPTVTCVKHIFTKKSYFICSYPTMSNSQCTSVLDTISVQELAHVSPTAVLDAEKAFLFKHQHRFVNTLEHVCKSKNYAIEQHVPVLIQKDEETASSIKDHFTETCFVLESTVSEASAWVRATFARYLNKPKAFWIDYIRLWEEGVHTLGKSVPELKEDVCEEKMWHLLSLNKEFIHCIRNQGCTGVLVDSNLNAWLILPGGFVIKGHYNITPEDILFVGARYG.

This sequence belongs to the herpesviridae CVC1 protein family. In terms of assembly, interacts (via C-terminus) with capsid vertex component 2/CVC2.

It localises to the virion. Its subcellular location is the host nucleus. Functionally, capsid vertex-specific component that plays a role during viral DNA encapsidation, assuring correct genome cleavage and presumably stabilizing capsids that contain full-length viral genomes. The protein is Capsid vertex component 1 of Saimiriine herpesvirus 2 (strain 11) (SaHV-2).